A 354-amino-acid polypeptide reads, in one-letter code: GDSL esterase/lipase At5g03820 (354 aa).

The N-terminal stretch at 1 to 24 (MKMFIIMLMTFSVIACFYAGVGTG) is a signal peptide. Ser-37 functions as the Nucleophile in the catalytic mechanism. Residues Asn-66, Asn-100, Asn-237, Asn-256, Asn-257, Asn-261, and Asn-321 are each glycosylated (N-linked (GlcNAc...) asparagine). Residues Asp-329 and His-332 contribute to the active site.

This sequence belongs to the 'GDSL' lipolytic enzyme family.

The protein resides in the secreted. The protein is GDSL esterase/lipase At5g03820 of Arabidopsis thaliana (Mouse-ear cress).